A 31-amino-acid polypeptide reads, in one-letter code: Sarcolipin (31 aa).

The Cytoplasmic segment spans residues 1–7 (MERSTRE). A helical transmembrane segment spans residues 8–26 (LCLNFTVVLITVILIWLLV). The Lumenal segment spans residues 27 to 31 (RSYQY).

It belongs to the sarcolipin family. As to quaternary structure, homooligomer. Can also form heterooligomers with other sarcoplasmic/endoplasmic reticulum calcium ATPase (SERCA) regulators ARLN, ERLN, PLN and STRIT1/DWORF. Monomer. Interacts with calcium ATPase ATP2A1/SERCA1. Interacts as a monomer with ATP2A2/SERCA2; the interaction decreases ATP2A2 Ca(2+) affinity. Interacts with VMP1; VMP1 competes with PLN and SLN to prevent them from forming an inhibitory complex with ATP2A2. As to expression, skeletal muscle (at protein level).

Its subcellular location is the sarcoplasmic reticulum membrane. It localises to the endoplasmic reticulum membrane. Functionally, reversibly inhibits the activity of ATP2A1/SERCA1 and ATP2A2/SERCA2 in sarcoplasmic reticulum by decreasing the apparent affinity of the ATPase for Ca(2+). Also inhibits the activity of ATP2A3/SERCA3. Modulates calcium re-uptake during muscle relaxation and plays an important role in calcium homeostasis in muscle. Required for muscle-based, non-shivering thermogenesis. In Oryctolagus cuniculus (Rabbit), this protein is Sarcolipin (SLN).